Consider the following 430-residue polypeptide: Adenylosuccinate synthetase (430 aa).

Residues 12–18 (GDEGKGK) and 40–42 (GHT) contribute to the GTP site. Asp-13 functions as the Proton acceptor in the catalytic mechanism. Mg(2+)-binding residues include Asp-13 and Gly-40. Residues 13-16 (DEGK), 38-41 (NAGH), Thr-128, Arg-142, Gln-223, Thr-238, and Arg-302 contribute to the IMP site. His-41 functions as the Proton donor in the catalytic mechanism. 298-304 (TVTKRPR) provides a ligand contact to substrate. GTP-binding positions include Arg-304, 330-332 (CVD), and 412-414 (SVG).

This sequence belongs to the adenylosuccinate synthetase family. Homodimer. Mg(2+) serves as cofactor.

It localises to the cytoplasm. The catalysed reaction is IMP + L-aspartate + GTP = N(6)-(1,2-dicarboxyethyl)-AMP + GDP + phosphate + 2 H(+). Its pathway is purine metabolism; AMP biosynthesis via de novo pathway; AMP from IMP: step 1/2. Plays an important role in the de novo pathway of purine nucleotide biosynthesis. Catalyzes the first committed step in the biosynthesis of AMP from IMP. In Ligilactobacillus salivarius (strain UCC118) (Lactobacillus salivarius), this protein is Adenylosuccinate synthetase.